The chain runs to 424 residues: Glutamate-1-semialdehyde 2,1-aminomutase (424 aa).

Lysine 263 is modified (N6-(pyridoxal phosphate)lysine).

It belongs to the class-III pyridoxal-phosphate-dependent aminotransferase family. HemL subfamily. In terms of assembly, homodimer. The cofactor is pyridoxal 5'-phosphate.

It localises to the cytoplasm. It catalyses the reaction (S)-4-amino-5-oxopentanoate = 5-aminolevulinate. Its pathway is porphyrin-containing compound metabolism; protoporphyrin-IX biosynthesis; 5-aminolevulinate from L-glutamyl-tRNA(Glu): step 2/2. The protein is Glutamate-1-semialdehyde 2,1-aminomutase of Campylobacter jejuni subsp. jejuni serotype O:2 (strain ATCC 700819 / NCTC 11168).